We begin with the raw amino-acid sequence, 146 residues long: Hemoglobin subunit delta (146 aa).

A Globin domain is found at H2–H146. S50 bears the Phosphoserine mark. Residues H63 and H92 each coordinate heme b.

It belongs to the globin family. As to quaternary structure, heterotetramer of two delta chains and two alpha chains. Red blood cells.

The chain is Hemoglobin subunit delta (HBD) from Aotus trivirgatus (Three-striped night monkey).